The sequence spans 431 residues: Adenylosuccinate synthetase (431 aa).

GTP-binding positions include 13 to 19 and 41 to 43; these read GDEGKGK and GHT. Catalysis depends on aspartate 14, which acts as the Proton acceptor. Residues aspartate 14 and glycine 41 each coordinate Mg(2+). IMP contacts are provided by residues 14–17, 39–42, threonine 130, arginine 144, glutamine 225, threonine 240, and arginine 304; these read DEGK and NAGH. The Proton donor role is filled by histidine 42. 300-306 lines the substrate pocket; that stretch reads SVTGRPR. GTP is bound by residues arginine 306, 332-334, and 414-416; these read KLD and STG.

Belongs to the adenylosuccinate synthetase family. In terms of assembly, homodimer. Mg(2+) serves as cofactor.

The protein localises to the cytoplasm. It carries out the reaction IMP + L-aspartate + GTP = N(6)-(1,2-dicarboxyethyl)-AMP + GDP + phosphate + 2 H(+). It functions in the pathway purine metabolism; AMP biosynthesis via de novo pathway; AMP from IMP: step 1/2. In terms of biological role, plays an important role in the de novo pathway of purine nucleotide biosynthesis. Catalyzes the first committed step in the biosynthesis of AMP from IMP. The polypeptide is Adenylosuccinate synthetase (Bordetella petrii (strain ATCC BAA-461 / DSM 12804 / CCUG 43448)).